A 175-amino-acid polypeptide reads, in one-letter code: Crossover junction endodeoxyribonuclease RuvC (175 aa).

Active-site residues include aspartate 11, glutamate 71, and histidine 143. Positions 11, 71, and 143 each coordinate Mg(2+).

Belongs to the RuvC family. Homodimer which binds Holliday junction (HJ) DNA. The HJ becomes 2-fold symmetrical on binding to RuvC with unstacked arms; it has a different conformation from HJ DNA in complex with RuvA. In the full resolvosome a probable DNA-RuvA(4)-RuvB(12)-RuvC(2) complex forms which resolves the HJ. The cofactor is Mg(2+).

The protein resides in the cytoplasm. The catalysed reaction is Endonucleolytic cleavage at a junction such as a reciprocal single-stranded crossover between two homologous DNA duplexes (Holliday junction).. The RuvA-RuvB-RuvC complex processes Holliday junction (HJ) DNA during genetic recombination and DNA repair. Endonuclease that resolves HJ intermediates. Cleaves cruciform DNA by making single-stranded nicks across the HJ at symmetrical positions within the homologous arms, yielding a 5'-phosphate and a 3'-hydroxyl group; requires a central core of homology in the junction. The consensus cleavage sequence is 5'-(A/T)TT(C/G)-3'. Cleavage occurs on the 3'-side of the TT dinucleotide at the point of strand exchange. HJ branch migration catalyzed by RuvA-RuvB allows RuvC to scan DNA until it finds its consensus sequence, where it cleaves and resolves the cruciform DNA. In Parvibaculum lavamentivorans (strain DS-1 / DSM 13023 / NCIMB 13966), this protein is Crossover junction endodeoxyribonuclease RuvC.